We begin with the raw amino-acid sequence, 27 residues long: Protein YqiM (27 aa).

In Escherichia coli (strain K12), this protein is Protein YqiM.